A 113-amino-acid polypeptide reads, in one-letter code: Phosphorelay protein LuxU (113 aa).

The HPt domain maps to 18-113 (GEENVPILVN…THQCYSDLVH (96 aa)). Histidine 57 is modified (phosphohistidine).

As to quaternary structure, monomer.

Its function is as follows. Phosphorelay protein which receives sensory signals from a sensory kinase and transmit them to LuxO. At low cell density, a phosphoryl group is transferred from the sensory kinase, probably on His-57 and this phosphoryl group is further transferred to LuxO. The chain is Phosphorelay protein LuxU (luxU) from Vibrio cholerae serotype O1 (strain ATCC 39315 / El Tor Inaba N16961).